We begin with the raw amino-acid sequence, 623 residues long: Dictomallein-5 (623 aa).

The first 21 residues, Met1 to Ser21, serve as a signal peptide directing secretion. The region spanning Pro174–Tyr435 is the Peptidase M66 domain. His327 serves as a coordination point for Zn(2+). The active site involves Glu328. 2 residues coordinate Zn(2+): His331 and His337.

It belongs to the dictomallein family. It depends on Zn(2+) as a cofactor.

The protein resides in the secreted. The polypeptide is Dictomallein-5 (dtmlE) (Dictyostelium discoideum (Social amoeba)).